A 785-amino-acid chain; its full sequence is Endonuclease MutS2 (785 aa).

333-340 (GPNTGGKT) serves as a coordination point for ATP. The 76-residue stretch at 710–785 (LDLRGQRYDE…GNGATIVQLK (76 aa)) folds into the Smr domain.

This sequence belongs to the DNA mismatch repair MutS family. MutS2 subfamily. In terms of assembly, homodimer. Binds to stalled ribosomes, contacting rRNA.

Its function is as follows. Endonuclease that is involved in the suppression of homologous recombination and thus may have a key role in the control of bacterial genetic diversity. Acts as a ribosome collision sensor, splitting the ribosome into its 2 subunits. Detects stalled/collided 70S ribosomes which it binds and splits by an ATP-hydrolysis driven conformational change. Acts upstream of the ribosome quality control system (RQC), a ribosome-associated complex that mediates the extraction of incompletely synthesized nascent chains from stalled ribosomes and their subsequent degradation. Probably generates substrates for RQC. The protein is Endonuclease MutS2 of Lactobacillus acidophilus (strain ATCC 700396 / NCK56 / N2 / NCFM).